The chain runs to 501 residues: ATP synthase subunit alpha (501 aa).

169–176 contacts ATP; the sequence is GDRQTGKT.

This sequence belongs to the ATPase alpha/beta chains family. In terms of assembly, F-type ATPases have 2 components, CF(1) - the catalytic core - and CF(0) - the membrane proton channel. CF(1) has five subunits: alpha(3), beta(3), gamma(1), delta(1), epsilon(1). CF(0) has three main subunits: a(1), b(2) and c(9-12). The alpha and beta chains form an alternating ring which encloses part of the gamma chain. CF(1) is attached to CF(0) by a central stalk formed by the gamma and epsilon chains, while a peripheral stalk is formed by the delta and b chains.

It is found in the cell inner membrane. It carries out the reaction ATP + H2O + 4 H(+)(in) = ADP + phosphate + 5 H(+)(out). Functionally, produces ATP from ADP in the presence of a proton gradient across the membrane. The alpha chain is a regulatory subunit. This Campylobacter jejuni subsp. jejuni serotype O:6 (strain 81116 / NCTC 11828) protein is ATP synthase subunit alpha.